The following is a 764-amino-acid chain: Phenylalanine--tRNA ligase beta subunit (764 aa).

The tRNA-binding domain occupies 38–148 (CIAPKNVVVG…GELVLGKELN (111 aa)). The region spanning 375–455 (LKDRTLTFQL…RFVGIDNLVS (81 aa)) is the B5 domain. 4 residues coordinate Mg(2+): Asp433, Asp439, Glu442, and Glu443. Positions 673–763 (SIYPSSVRDL…LEKEFNARLK (91 aa)) constitute an FDX-ACB domain.

It belongs to the phenylalanyl-tRNA synthetase beta subunit family. Type 1 subfamily. In terms of assembly, tetramer of two alpha and two beta subunits. Requires Mg(2+) as cofactor.

Its subcellular location is the cytoplasm. The catalysed reaction is tRNA(Phe) + L-phenylalanine + ATP = L-phenylalanyl-tRNA(Phe) + AMP + diphosphate + H(+). The protein is Phenylalanine--tRNA ligase beta subunit (pheT) of Helicobacter pylori (strain ATCC 700392 / 26695) (Campylobacter pylori).